The chain runs to 172 residues: MSKLSSYPHAADFINMEEPPKSKEFFDDLCAVPNLLKRRFPNSRRSTHYCEALNYSRKKLPVVLSKMTLQELRHNMSTFFLQEKDQINIYDTCKVIDMGDRVLLETMPPQPRDLFEKLHASKTNLVVQTAALDEPLLTVKAELQSSSFPQKSSLFLYEDYKKFIYQQLDMFS.

This is an uncharacterized protein from Saccharomyces cerevisiae (strain ATCC 204508 / S288c) (Baker's yeast).